We begin with the raw amino-acid sequence, 280 residues long: Cell division control protein 2 homolog B (280 aa).

Residues 1 to 5 and Lys-20 contribute to the ATP site; that span reads AYGVV. In terms of domain architecture, Protein kinase spans 1-274; sequence AYGVVYKARD…AKKALEHEYF (274 aa). A Phosphotyrosine modification is found at Tyr-2. Asp-114 serves as the catalytic Proton acceptor. Thr-148 is modified (phosphothreonine; by CAK).

Belongs to the protein kinase superfamily. CMGC Ser/Thr protein kinase family. CDC2/CDKX subfamily.

The enzyme catalyses L-seryl-[protein] + ATP = O-phospho-L-seryl-[protein] + ADP + H(+). It carries out the reaction L-threonyl-[protein] + ATP = O-phospho-L-threonyl-[protein] + ADP + H(+). The catalysed reaction is [DNA-directed RNA polymerase] + ATP = phospho-[DNA-directed RNA polymerase] + ADP + H(+). Phosphorylation at Tyr-2 inactivates the enzyme, while phosphorylation at Thr-148 activates it. Functionally, plays a key role in the control of the eukaryotic cell cycle. This chain is Cell division control protein 2 homolog B (CDC2B), found in Antirrhinum majus (Garden snapdragon).